Consider the following 261-residue polypeptide: Cytochrome c oxidase subunit 3 (261 aa).

Over 1–15 (MTHQTHAYHMVNPSP) the chain is Mitochondrial matrix. Residues 16–34 (WPLTGALSALLMTSGLTMW) traverse the membrane as a helical segment. The Mitochondrial intermembrane segment spans residues 35–40 (FHYNST). The helical transmembrane segment at 41 to 66 (ILLMLGLTTNMLTMYQWWRDIIREST) threads the bilayer. The Mitochondrial matrix segment spans residues 67 to 72 (FQGHHT). A helical transmembrane segment spans residues 73–105 (PTVQKGLRYGMILFIISEVLFFTGFFWAFYHSS). Residues 106 to 128 (LAPTPELGGCWPPTGIHPLNPLE) lie on the Mitochondrial intermembrane side of the membrane. The chain crosses the membrane as a helical span at residues 129-152 (VPLLNTSVLLASGVSITWAHHSLM). The Mitochondrial matrix portion of the chain corresponds to 153–155 (EGD). The chain crosses the membrane as a helical span at residues 156–183 (RNHMLQALFITIALGIYFTLLQASEYYE). The Mitochondrial intermembrane portion of the chain corresponds to 184 to 190 (APFTISD). A helical transmembrane segment spans residues 191–223 (GVYGSTFFVATGFHGLHVIIGSTFLIVCFFRQL). At 224–232 (KFHFTSSHH) the chain is on the mitochondrial matrix side. A helical membrane pass occupies residues 233-256 (FGFEAAAWYWHFVDVVWLFLYVSI). Over 257–261 (YWWGS) the chain is Mitochondrial intermembrane.

The protein belongs to the cytochrome c oxidase subunit 3 family. In terms of assembly, component of the cytochrome c oxidase (complex IV, CIV), a multisubunit enzyme composed of 14 subunits. The complex is composed of a catalytic core of 3 subunits MT-CO1, MT-CO2 and MT-CO3, encoded in the mitochondrial DNA, and 11 supernumerary subunits COX4I, COX5A, COX5B, COX6A, COX6B, COX6C, COX7A, COX7B, COX7C, COX8 and NDUFA4, which are encoded in the nuclear genome. The complex exists as a monomer or a dimer and forms supercomplexes (SCs) in the inner mitochondrial membrane with NADH-ubiquinone oxidoreductase (complex I, CI) and ubiquinol-cytochrome c oxidoreductase (cytochrome b-c1 complex, complex III, CIII), resulting in different assemblies (supercomplex SCI(1)III(2)IV(1) and megacomplex MCI(2)III(2)IV(2)).

It localises to the mitochondrion inner membrane. It catalyses the reaction 4 Fe(II)-[cytochrome c] + O2 + 8 H(+)(in) = 4 Fe(III)-[cytochrome c] + 2 H2O + 4 H(+)(out). Its function is as follows. Component of the cytochrome c oxidase, the last enzyme in the mitochondrial electron transport chain which drives oxidative phosphorylation. The respiratory chain contains 3 multisubunit complexes succinate dehydrogenase (complex II, CII), ubiquinol-cytochrome c oxidoreductase (cytochrome b-c1 complex, complex III, CIII) and cytochrome c oxidase (complex IV, CIV), that cooperate to transfer electrons derived from NADH and succinate to molecular oxygen, creating an electrochemical gradient over the inner membrane that drives transmembrane transport and the ATP synthase. Cytochrome c oxidase is the component of the respiratory chain that catalyzes the reduction of oxygen to water. Electrons originating from reduced cytochrome c in the intermembrane space (IMS) are transferred via the dinuclear copper A center (CU(A)) of subunit 2 and heme A of subunit 1 to the active site in subunit 1, a binuclear center (BNC) formed by heme A3 and copper B (CU(B)). The BNC reduces molecular oxygen to 2 water molecules using 4 electrons from cytochrome c in the IMS and 4 protons from the mitochondrial matrix. In Tragelaphus imberbis (Lesser kudu), this protein is Cytochrome c oxidase subunit 3 (MT-CO3).